A 138-amino-acid chain; its full sequence is Nucleoside diphosphate kinase (138 aa).

ATP contacts are provided by Lys-9, Phe-57, Arg-85, Thr-91, Arg-102, and Asn-112. His-115 functions as the Pros-phosphohistidine intermediate in the catalytic mechanism.

Belongs to the NDK family. As to quaternary structure, homotetramer. Mg(2+) is required as a cofactor.

It is found in the cytoplasm. The catalysed reaction is a 2'-deoxyribonucleoside 5'-diphosphate + ATP = a 2'-deoxyribonucleoside 5'-triphosphate + ADP. The enzyme catalyses a ribonucleoside 5'-diphosphate + ATP = a ribonucleoside 5'-triphosphate + ADP. Functionally, major role in the synthesis of nucleoside triphosphates other than ATP. The ATP gamma phosphate is transferred to the NDP beta phosphate via a ping-pong mechanism, using a phosphorylated active-site intermediate. This chain is Nucleoside diphosphate kinase, found in Deinococcus radiodurans (strain ATCC 13939 / DSM 20539 / JCM 16871 / CCUG 27074 / LMG 4051 / NBRC 15346 / NCIMB 9279 / VKM B-1422 / R1).